The sequence spans 235 residues: Vacuolar protein sorting-associated protein 60.2 (235 aa).

A disordered region spans residues 1–30 (MKRIFGAKNNKEPPPSIQDASDRINKRGDS). The segment covering 20–30 (ASDRINKRGDS) has biased composition (basic and acidic residues). Residues 99-148 (LKDAQQTMTALKSANKELKGMMKTVKIQDIDNLQDDMMDLMDESSEIQET) adopt a coiled-coil conformation. A disordered region spans residues 174-235 (DMGNETEADG…PAVPRASLRG (62 aa)).

This sequence belongs to the SNF7 family.

It is found in the endosome. The protein resides in the multivesicular body membrane. Functionally, probable peripherally associated component of the endosomal sorting required for transport complex III (ESCRT-III) which is involved in multivesicular bodies (MVBs) formation and sorting of endosomal cargo proteins into MVBs. This is Vacuolar protein sorting-associated protein 60.2 from Arabidopsis thaliana (Mouse-ear cress).